Consider the following 1034-residue polypeptide: Potassium-transporting ATPase alpha chain 1 (1034 aa).

Topologically, residues 1–97 (MGKAENYELY…NALRPPRGTP (97 aa)) are cytoplasmic. Residues Tyr7 and Tyr10 each carry the phosphotyrosine modification. The tract at residues 14-41 (LGSGPGGDMTAKMSKKKAGGGGGKKKEK) is disordered. Over residues 26–39 (MSKKKAGGGGGKKK) the composition is skewed to basic residues. Ser27 carries the post-translational modification Phosphoserine. A helical membrane pass occupies residues 98-118 (EYVKFARQLAGGLQCLMWVAA). Topologically, residues 119 to 141 (AICLIAFAIQASEGDLTTDDNLY) are lumenal. A helical membrane pass occupies residues 142-162 (LAVALIAVVVVTGCFGYYQEF). Over 163–298 (KSTNIIASFK…NEKTPIAIEI (136 aa)) the chain is Cytoplasmic. Residues 299–318 (EHFVDIIAGLAILFGATFFV) traverse the membrane as a helical segment. The Lumenal portion of the chain corresponds to 319–330 (VAMCIGYTFLRA). Residues 331–348 (MVFFMAIVVAYVPEGLLA) traverse the membrane as a helical segment. 4 residues coordinate K(+): Val339, Ala340, Val342, and Glu344. Residues 349–782 (TVTVCLSLTA…EQGRLIFDNL (434 aa)) are Cytoplasmic-facing. Asp386 serves as the catalytic 4-aspartylphosphate intermediate. Mg(2+) is bound by residues Asp386 and Thr388. A phosphoserine mark is found at Ser462 and Ser600. Asp727 and Asp731 together coordinate Mg(2+). The helical transmembrane segment at 783 to 802 (KKSIAYTLTKNIPELTPYLI) threads the bilayer. Residue Glu796 participates in K(+) binding. Residues 803 to 812 (YITVSVPLPL) are Lumenal-facing. Residues 813–833 (GCITILFIELCTDIFPSVSLA) traverse the membrane as a helical segment. A K(+)-binding site is contributed by Glu821. At 834–853 (YEKAESDIMHLRPRNPKRDR) the chain is on the cytoplasmic side. Phosphoserine is present on Ser839. The helical transmembrane segment at 854 to 876 (LVNEPLAAYSYFQIGAIQSFAGF) threads the bilayer. Residues 877–928 (ADYFTAMAQEGWFPLLCVGLRPQWEDHHLQDLQDSYGQEWTFGQRLYQQYTC) are Lumenal-facing. Residues 929–948 (YTVFFISIEMCQIADVLIRK) traverse the membrane as a helical segment. At 949-962 (TRRLSVFQQGFFRN) the chain is on the cytoplasmic side. Phosphoserine; by PKA is present on Ser953. Residues 963–981 (KILVIAIVFQVCIGCFLCY) form a helical membrane-spanning segment. Residues 982 to 996 (CPGMPNIFNFMPIRF) lie on the Lumenal side of the membrane. A helical transmembrane segment spans residues 997 to 1017 (QWWLVPMPFGLLIFVYDEIRK). The Cytoplasmic portion of the chain corresponds to 1018–1034 (LGVRCCPGSWWDQELYY).

This sequence belongs to the cation transport ATPase (P-type) (TC 3.A.3) family. Type IIC subfamily. The gastric H(+)/K(+) ATPase pump is composed of the catalytic alpha subunit ATP4A and the regulatory beta subunit ATP4B. Interacts (via the P-domain) with ATP4B (via N-terminus); this interaction stabilizes the lumenal-open E2 conformation state and prevents the reverse reaction of the transport cycle. Expressed in parietal cells (at protein level).

Its subcellular location is the apical cell membrane. It carries out the reaction K(+)(out) + ATP + H2O + H(+)(in) = K(+)(in) + ADP + phosphate + 2 H(+)(out). Its function is as follows. The catalytic subunit of the gastric H(+)/K(+) ATPase pump which transports H(+) ions in exchange for K(+) ions across the apical membrane of parietal cells. Uses ATP as an energy source to pump H(+) ions to the gastric lumen while transporting K(+) ion from the lumen into the cell. Remarkably generates a million-fold proton gradient across the gastric parietal cell membrane, acidifying the gastric juice down to pH 1. Within a transport cycle, the transfer of a H(+) ion across the membrane is coupled to ATP hydrolysis and is associated with a transient phosphorylation that shifts the pump conformation from inward-facing (E1) to outward-facing state (E2). The release of the H(+) ion in the stomach lumen is followed by binding of K(+) ion converting the pump conformation back to the E1 state. This Mus musculus (Mouse) protein is Potassium-transporting ATPase alpha chain 1.